Here is a 130-residue protein sequence, read N- to C-terminus: Protein YoeA (130 aa).

An N-terminal signal peptide occupies residues Met1–Ala28. A TBDR plug domain is found at Asn51 to Arg130.

The protein belongs to the TonB-dependent receptor family.

The polypeptide is Protein YoeA (yoeA) (Escherichia coli (strain K12)).